Here is a 1026-residue protein sequence, read N- to C-terminus: Multidrug resistance protein MdtC (1026 aa).

11 helical membrane passes run 15–35 (ILIA…LPVA), 333–353 (EVEE…FLFL), 360–380 (LIPA…MYLC), 387–407 (LSLM…IVVL), 431–451 (VGFT…PLLL), 463–483 (FAVT…TLTP), 528–548 (LVGV…IAIP), 853–873 (LILI…LYES), 897–917 (LFNA…IGIV), 953–973 (PIMM…LSGG), and 984–1004 (ITIV…TPVV).

It belongs to the resistance-nodulation-cell division (RND) (TC 2.A.6) family. MdtC subfamily. Part of a tripartite efflux system composed of MdtA, MdtB and MdtC. MdtC forms a heteromultimer with MdtB.

The protein localises to the cell inner membrane. This chain is Multidrug resistance protein MdtC, found in Salmonella arizonae (strain ATCC BAA-731 / CDC346-86 / RSK2980).